Consider the following 380-residue polypeptide: Cytochrome b (380 aa).

A run of 4 helical transmembrane segments spans residues Phe-33 to Met-53, Trp-77 to Ile-98, Trp-113 to Leu-133, and Phe-178 to Leu-198. Heme b contacts are provided by His-83 and His-97. Heme b-binding residues include His-182 and His-196. Position 201 (His-201) interacts with a ubiquinone. The next 4 membrane-spanning stretches (helical) occupy residues Tyr-226–Asn-246, Leu-288–His-308, Ser-320–Gly-340, and Phe-347–Pro-367.

It belongs to the cytochrome b family. In terms of assembly, the cytochrome bc1 complex contains 3 respiratory subunits (MT-CYB, CYC1 and UQCRFS1), 2 core proteins (UQCRC1 and UQCRC2) and probably 6 low-molecular weight proteins. Heme b is required as a cofactor.

The protein resides in the mitochondrion inner membrane. Its function is as follows. Component of the ubiquinol-cytochrome c reductase complex (complex III or cytochrome b-c1 complex) that is part of the mitochondrial respiratory chain. The b-c1 complex mediates electron transfer from ubiquinol to cytochrome c. Contributes to the generation of a proton gradient across the mitochondrial membrane that is then used for ATP synthesis. This is Cytochrome b (mt-cyb) from Lepisosteus oculatus (Spotted gar).